The following is a 117-amino-acid chain: NADPH-dependent 7-cyano-7-deazaguanine reductase (117 aa).

The active-site Thioimide intermediate is Cys-31. The Proton donor role is filled by Asp-38. Residues 53–55 and 72–73 contribute to the substrate site; these read IEL and YE.

Belongs to the GTP cyclohydrolase I family. QueF type 1 subfamily.

It localises to the cytoplasm. The catalysed reaction is 7-aminomethyl-7-carbaguanine + 2 NADP(+) = 7-cyano-7-deazaguanine + 2 NADPH + 3 H(+). Its pathway is tRNA modification; tRNA-queuosine biosynthesis. Its function is as follows. Catalyzes the NADPH-dependent reduction of 7-cyano-7-deazaguanine (preQ0) to 7-aminomethyl-7-deazaguanine (preQ1). The polypeptide is NADPH-dependent 7-cyano-7-deazaguanine reductase (Chlorobaculum tepidum (strain ATCC 49652 / DSM 12025 / NBRC 103806 / TLS) (Chlorobium tepidum)).